The primary structure comprises 155 residues: 6,7-dimethyl-8-ribityllumazine synthase (155 aa).

Residues Phe-22, 57 to 59 (AYE), and 81 to 83 (SVI) contribute to the 5-amino-6-(D-ribitylamino)uracil site. 86–87 (GT) is a (2S)-2-hydroxy-3-oxobutyl phosphate binding site. Residue His-88 is the Proton donor of the active site. Phe-113 contacts 5-amino-6-(D-ribitylamino)uracil. Arg-127 provides a ligand contact to (2S)-2-hydroxy-3-oxobutyl phosphate.

Belongs to the DMRL synthase family. Forms an icosahedral capsid composed of 60 subunits, arranged as a dodecamer of pentamers.

The catalysed reaction is (2S)-2-hydroxy-3-oxobutyl phosphate + 5-amino-6-(D-ribitylamino)uracil = 6,7-dimethyl-8-(1-D-ribityl)lumazine + phosphate + 2 H2O + H(+). It functions in the pathway cofactor biosynthesis; riboflavin biosynthesis; riboflavin from 2-hydroxy-3-oxobutyl phosphate and 5-amino-6-(D-ribitylamino)uracil: step 1/2. In terms of biological role, catalyzes the formation of 6,7-dimethyl-8-ribityllumazine by condensation of 5-amino-6-(D-ribitylamino)uracil with 3,4-dihydroxy-2-butanone 4-phosphate. This is the penultimate step in the biosynthesis of riboflavin. This Photobacterium phosphoreum protein is 6,7-dimethyl-8-ribityllumazine synthase.